A 588-amino-acid chain; its full sequence is Beta-(1--&gt;2)glucan export ATP-binding/permease protein NdvA (588 aa).

Residues 21-301 (VAVVVIANVI…MRQFVTQIFE (281 aa)) form the ABC transmembrane type-1 domain. Helical transmembrane passes span 22–42 (AVVV…PVLF), 57–77 (PILI…VAVA), 136–156 (THLA…AMDL), 158–178 (LSFV…WVMG), 248–268 (TAST…VKNG), and 272–292 (VGDV…LDQM). The ABC transporter domain occupies 335 to 569 (VEFRNINFGF…GGRFTSLLRT (235 aa)). 368–375 (GPTGAGKT) is an ATP binding site.

It belongs to the ABC transporter superfamily. Beta-(1--&gt;2)glucan exporter (TC 3.A.1.108.1) family. Homodimer.

It localises to the cell inner membrane. The enzyme catalyses [(1-&gt;2)-beta-D-glucosyl](n)(in) + ATP + H2O = [(1-&gt;2)-beta-D-glucosyl](n)(out) + ADP + phosphate + H(+). Functionally, involved in beta-(1--&gt;2)glucan export which is required for crown gall tumor formation. Transmembrane domains (TMD) form a pore in the inner membrane and the ATP-binding domain (NBD) is responsible for energy generation. This Rhizobium radiobacter (Agrobacterium tumefaciens) protein is Beta-(1--&gt;2)glucan export ATP-binding/permease protein NdvA.